Here is a 190-residue protein sequence, read N- to C-terminus: MASRGKTETSKLKQNLEEQLDRLMQQLQDLEECREELDADEYEETKKETLEQLSEFNDSLKKIMSGNMTLVDELSGMQLAIQAAISQAFKTPEVIRLFAKKQPGQLRTRLAEMDRDLMVGKLERELYTQRKVEILTALRKLGEKLTEDDETFLSANASAVLSQFEKVSTELGSGDKVLALAGFDVEKAKK.

Residues Ala-2–Ile-63 adopt a coiled-coil conformation.

The protein belongs to the CTNNBIP1 family. Does not interact with CTNNB1.

The protein is Protein LZIC (Lzic) of Mus musculus (Mouse).